The primary structure comprises 231 residues: Cytochrome c oxidase subunit 2 (231 aa).

Over 1 to 14 (MAHPAQLGLQNATS) the chain is Mitochondrial intermembrane. The helical transmembrane segment at 15–45 (PIMEELIAFHDHALMIIFLISSLVLYVISLM) threads the bilayer. Over 46 to 59 (LTTKLTHTSTMNAQ) the chain is Mitochondrial matrix. The helical transmembrane segment at 60-87 (EIEMIWTILPAIILIMIALPSLRILYMT) threads the bilayer. The Mitochondrial intermembrane portion of the chain corresponds to 88-231 (DEFNKPYLTL…WASYLYIVSL (144 aa)). The Cu cation site is built by His-161, Cys-196, Glu-198, Cys-200, His-204, and Met-207. Mg(2+) is bound at residue Glu-198.

Belongs to the cytochrome c oxidase subunit 2 family. As to quaternary structure, component of the cytochrome c oxidase (complex IV, CIV), a multisubunit enzyme composed of 14 subunits. The complex is composed of a catalytic core of 3 subunits MT-CO1, MT-CO2 and MT-CO3, encoded in the mitochondrial DNA, and 11 supernumerary subunits COX4I, COX5A, COX5B, COX6A, COX6B, COX6C, COX7A, COX7B, COX7C, COX8 and NDUFA4, which are encoded in the nuclear genome. The complex exists as a monomer or a dimer and forms supercomplexes (SCs) in the inner mitochondrial membrane with NADH-ubiquinone oxidoreductase (complex I, CI) and ubiquinol-cytochrome c oxidoreductase (cytochrome b-c1 complex, complex III, CIII), resulting in different assemblies (supercomplex SCI(1)III(2)IV(1) and megacomplex MCI(2)III(2)IV(2)). Found in a complex with TMEM177, COA6, COX18, COX20, SCO1 and SCO2. Interacts with TMEM177 in a COX20-dependent manner. Interacts with COX20. Interacts with COX16. Requires Cu cation as cofactor.

It localises to the mitochondrion inner membrane. The enzyme catalyses 4 Fe(II)-[cytochrome c] + O2 + 8 H(+)(in) = 4 Fe(III)-[cytochrome c] + 2 H2O + 4 H(+)(out). In terms of biological role, component of the cytochrome c oxidase, the last enzyme in the mitochondrial electron transport chain which drives oxidative phosphorylation. The respiratory chain contains 3 multisubunit complexes succinate dehydrogenase (complex II, CII), ubiquinol-cytochrome c oxidoreductase (cytochrome b-c1 complex, complex III, CIII) and cytochrome c oxidase (complex IV, CIV), that cooperate to transfer electrons derived from NADH and succinate to molecular oxygen, creating an electrochemical gradient over the inner membrane that drives transmembrane transport and the ATP synthase. Cytochrome c oxidase is the component of the respiratory chain that catalyzes the reduction of oxygen to water. Electrons originating from reduced cytochrome c in the intermembrane space (IMS) are transferred via the dinuclear copper A center (CU(A)) of subunit 2 and heme A of subunit 1 to the active site in subunit 1, a binuclear center (BNC) formed by heme A3 and copper B (CU(B)). The BNC reduces molecular oxygen to 2 water molecules using 4 electrons from cytochrome c in the IMS and 4 protons from the mitochondrial matrix. This is Cytochrome c oxidase subunit 2 (MT-CO2) from Alouatta palliata (Mantled howler monkey).